The following is a 187-amino-acid chain: BCL2/adenovirus E1B 19 kDa protein-interacting protein 3 (187 aa).

Residues 42-86 (LDAQHESGRSSSKSSHCDSPPRSQTPQDTNRAEIDSHSFGEKNST) form a disordered region. 6 positions are modified to phosphoserine: Ser-48, Ser-60, Ser-77, Ser-79, Ser-85, and Ser-88. The span at 50 to 63 (RSSSKSSHCDSPPR) shows a compositional bias: low complexity. Basic and acidic residues predominate over residues 71–81 (NRAEIDSHSFG). A BH3 motif is present at residues 93-118 (IERRREVESILKKNSDWIWDWSSRPE). The chain crosses the membrane as a helical span at residues 157-177 (VFLPSLLLSHLLAIGLGIYIG).

The protein belongs to the NIP3 family. In terms of assembly, homodimer. Binds to BCL2. Interacts with BNIP3L and ACAA2. Interacts (via BH3 domain) with SPATA18 (via coiled-coil domains). Interacts with BOK; promotes BOK oligomerization. Interacts with PPTC7; this interaction promotes BNIP3 degradation.

It localises to the mitochondrion. The protein resides in the mitochondrion outer membrane. Functionally, apoptosis-inducing protein that can overcome BCL2 suppression. May play a role in repartitioning calcium between the two major intracellular calcium stores in association with BCL2. Involved in mitochondrial quality control via its interaction with SPATA18/MIEAP: in response to mitochondrial damage, participates in mitochondrial protein catabolic process (also named MALM) leading to the degradation of damaged proteins inside mitochondria. The physical interaction of SPATA18/MIEAP, BNIP3 and BNIP3L/NIX at the mitochondrial outer membrane may play a critical role in the translocation of lysosomal proteins from the cytoplasm to the mitochondrial matrix. The physical interaction of SPATA18/MIEAP, BNIP3 and BNIP3L/NIX at the mitochondrial outer membrane regulates the opening of a pore in the mitochondrial double membrane in order to mediate the translocation of lysosomal proteins from the cytoplasm to the mitochondrial matrix. Plays an important role in the calprotectin (S100A8/A9)-induced cell death pathway. The sequence is that of BCL2/adenovirus E1B 19 kDa protein-interacting protein 3 from Mus musculus (Mouse).